A 447-amino-acid chain; its full sequence is Putative branched-chain amino acid carrier protein SSP1343 (447 aa).

Transmembrane regions (helical) follow at residues 6-26, 40-60, 74-94, 116-136, 143-163, 192-212, 228-248, 289-309, 324-344, 349-369, 381-401, and 416-436; these read WIIG…IFPP, ILAF…VGAL, PKFS…LFAI, LALF…CINP, IGSL…VKGF, GYLT…VNAV, LMAG…LGYI, LLGI…VVAV, IYVI…LNSV, VPVL…ILLA, IPVA…QGWI, and LEWF…AAMV.

The protein belongs to the branched chain amino acid transporter family.

The protein resides in the cell membrane. Component of the transport system for branched-chain amino acids (leucine, isoleucine and valine), which is coupled to a proton motive force. This Staphylococcus saprophyticus subsp. saprophyticus (strain ATCC 15305 / DSM 20229 / NCIMB 8711 / NCTC 7292 / S-41) protein is Putative branched-chain amino acid carrier protein SSP1343.